Here is a 773-residue protein sequence, read N- to C-terminus: uncharacterized protein (773 aa).

A disordered region spans residues 192–219; it reads EASGTNNNPKEIEMNSDTTSSVPKSGST.

The protein resides in the cytoplasm. This is an uncharacterized protein from Schizosaccharomyces pombe (strain 972 / ATCC 24843) (Fission yeast).